The following is a 1325-amino-acid chain: uncharacterized protein (1325 aa).

Residues 1 to 18 form the signal peptide; it reads MNRIYRVIWNCTLQVFQA. Cys19 carries the N-palmitoyl cysteine lipid modification. The S-diacylglycerol cysteine moiety is linked to residue Cys19.

To E.coli YfaL.

The protein localises to the cell membrane. This is an uncharacterized protein from Escherichia coli (strain K12).